The following is a 1052-amino-acid chain: Fibroblast growth factor receptor homolog 2 (1052 aa).

A signal peptide spans 1–19 (MAKVPITLVMIIAIVSAAA). Residues 20-600 (DLGCDYGHHR…EIYALLHAHP (581 aa)) lie on the Extracellular side of the membrane. Ig-like C2-type domains follow at residues 23–117 (CDYG…IASF), 124–230 (PALP…PTQL), and 240–340 (PMLK…RTVA). Cys-30 and Cys-90 are disulfide-bonded. 6 N-linked (GlcNAc...) asparagine glycosylation sites follow: Asn-99, Asn-137, Asn-175, Asn-181, Asn-249, and Asn-257. Cys-164 and Cys-217 are disulfide-bonded. Cys-262 and Cys-329 are disulfide-bonded. Residues 358–372 (TTTTTVASPIPTAST) show a composition bias toward low complexity. Residues 358-393 (TTTTTVASPIPTASTGEDNDDDVENPAAEASGGVGP) are disordered. Ig-like C2-type domains follow at residues 393–478 (PPVF…FSVQ) and 487–585 (PIIV…RVVS). A disulfide bridge links Cys-416 with Cys-462. Asn-423, Asn-444, Asn-494, Asn-500, Asn-526, Asn-541, Asn-546, Asn-555, and Asn-576 each carry an N-linked (GlcNAc...) asparagine glycan. Cysteines 507 and 566 form a disulfide. A helical transmembrane segment spans residues 601–626 (LGFTLAAITIVALFLLGSAFITFMLR). Residues 627 to 1052 (RLRREKLLKL…LRYQYTYKFN (426 aa)) are Cytoplasmic-facing. The Protein kinase domain maps to 712–1000 (LSLGSILGEG…ELVESFDGIL (289 aa)). Residues 718 to 726 (LGEGAFGRV) and Lys-748 contribute to the ATP site. Residue Asp-864 is the Proton acceptor of the active site. The residue at position 895 (Tyr-895) is a Phosphotyrosine; by autocatalysis. Residues 1017–1038 (PMLETPPSSGDEDDGSDTETFR) are disordered.

Belongs to the protein kinase superfamily. Tyr protein kinase family. Fibroblast growth factor receptor subfamily. During embryogenesis, expression is seen in mesoderm, endodermal precursor cells, CNS midline cells and trachea and salivary duct ectodermal cells.

It is found in the membrane. The catalysed reaction is L-tyrosyl-[protein] + ATP = O-phospho-L-tyrosyl-[protein] + ADP + H(+). May be required for patterning of muscle precursor cells: generation of mesodermal and endodermal layers, invaginations of various types of cells, and CNS formation. Essential for the ability of the migrating tracheal and midline cells to recognize external guiding cues. The sequence is that of Fibroblast growth factor receptor homolog 2 (btl) from Drosophila melanogaster (Fruit fly).